The following is a 348-amino-acid chain: Dihydroorotase (348 aa).

Zn(2+) is bound by residues H17 and H19. Residues 19 to 21 (HLR) and N45 each bind substrate. Positions 103, 140, and 178 each coordinate Zn(2+). N6-carboxylysine is present on K103. A substrate-binding site is contributed by H140. Substrate is bound at residue L223. D251 serves as a coordination point for Zn(2+). D251 is an active-site residue. Substrate-binding residues include H255 and A267.

It belongs to the metallo-dependent hydrolases superfamily. DHOase family. Class II DHOase subfamily. In terms of assembly, homodimer. It depends on Zn(2+) as a cofactor.

The catalysed reaction is (S)-dihydroorotate + H2O = N-carbamoyl-L-aspartate + H(+). Its pathway is pyrimidine metabolism; UMP biosynthesis via de novo pathway; (S)-dihydroorotate from bicarbonate: step 3/3. Catalyzes the reversible cyclization of carbamoyl aspartate to dihydroorotate. This is Dihydroorotase from Escherichia coli O6:H1 (strain CFT073 / ATCC 700928 / UPEC).